A 385-amino-acid polypeptide reads, in one-letter code: Homoserine O-succinyltransferase (385 aa).

The AB hydrolase-1 domain maps to 51 to 360; that stretch reads NAVLICHALS…DSPHGHDAFL (310 aa). Ser157 functions as the Nucleophile in the catalytic mechanism. Arg227 lines the substrate pocket. Catalysis depends on residues Asp323 and His356. Asp357 contributes to the substrate binding site.

This sequence belongs to the AB hydrolase superfamily. MetX family. In terms of assembly, homodimer.

Its subcellular location is the cytoplasm. It catalyses the reaction L-homoserine + succinyl-CoA = O-succinyl-L-homoserine + CoA. Its pathway is amino-acid biosynthesis; L-methionine biosynthesis via de novo pathway; O-succinyl-L-homoserine from L-homoserine: step 1/1. In terms of biological role, transfers a succinyl group from succinyl-CoA to L-homoserine, forming succinyl-L-homoserine. The polypeptide is Homoserine O-succinyltransferase (Hahella chejuensis (strain KCTC 2396)).